We begin with the raw amino-acid sequence, 495 residues long: Ectonucleoside triphosphate diphosphohydrolase 2 (495 aa).

Topologically, residues 1–4 are cytoplasmic; that stretch reads MAGK. A helical membrane pass occupies residues 5 to 25; it reads LVSLVPPLLLAAVGLAGLLLL. The Extracellular segment spans residues 26-462; sequence CVPTQDVREP…PGLRKGTHFS (437 aa). The N-linked (GlcNAc...) asparagine glycan is linked to Asn-64. The cysteines at positions 75 and 99 are disulfide-linked. Residue Asn-129 is glycosylated (N-linked (GlcNAc...) asparagine). The Proton acceptor role is filled by Glu-165. Residue 204 to 208 coordinates ATP; that stretch reads GASTQ. Disulfide bonds link Cys-242–Cys-284 and Cys-265–Cys-310. Asn-294 and Asn-319 each carry an N-linked (GlcNAc...) asparagine glycan. Cystine bridges form between Cys-323–Cys-328 and Cys-377–Cys-399. 2 N-linked (GlcNAc...) asparagine glycosylation sites follow: Asn-378 and Asn-443. Residues 463-483 form a helical membrane-spanning segment; the sequence is SWVALLLLFTVLILAALVLLL. The Cytoplasmic segment spans residues 484-495; that stretch reads RQVRSAKSPGAL.

It belongs to the GDA1/CD39 NTPase family. Ca(2+) is required as a cofactor. The cofactor is Mg(2+).

The protein resides in the cell membrane. Its function is as follows. In the nervous system, could hydrolyze ATP and other nucleotides to regulate purinergic neurotransmission. Hydrolyzes ADP only to a marginal extent. In Mus musculus (Mouse), this protein is Ectonucleoside triphosphate diphosphohydrolase 2 (Entpd2).